Consider the following 347-residue polypeptide: Protein NDL3 (347 aa).

The protein belongs to the NDRG family. Interacts with the heterodimers formed by GB1 and GG1, or GB1 and GG2. Interacts with RGS1.

The protein resides in the cytoplasm. Functionally, involved in a signaling pathway that modulates root auxin transport and auxin gradients. Acts partially by positively regulating the auxin carrier PIN2 and AUX1. Acts, together with GB1 as positive regulator of meristem initiation and branching. GB1 and NDL3 positively regulate basipetal inflorescence auxin transport and modulate MAX2 expression in shoots, which regulates organ and lateral meristem formation by the establishment and maintenance of auxin gradients. The polypeptide is Protein NDL3 (Arabidopsis thaliana (Mouse-ear cress)).